The primary structure comprises 469 residues: Glutamine synthetase (469 aa).

The region spanning 14–98 (NDVKYVDLRF…VVCDVLEPTT (85 aa)) is the GS beta-grasp domain. Residues 106 to 469 (PRGIAKKAMA…PVEFEMYYSV (364 aa)) enclose the GS catalytic domain. Mg(2+) contacts are provided by E131 and E133. ATP is bound at residue E209. Mg(2+)-binding residues include E214 and E221. L-glutamate-binding positions include 265-266 (NG) and G266. H270 provides a ligand contact to Mg(2+). Residues 272–274 (HQS) and S274 contribute to the ATP site. L-glutamate contacts are provided by R322, E328, and R340. The ATP site is built by R340, R345, and K353. Residue E358 participates in Mg(2+) binding. L-glutamate is bound at residue R360. The residue at position 398 (Y398) is an O-AMP-tyrosine.

This sequence belongs to the glutamine synthetase family. In terms of assembly, oligomer of 12 subunits arranged in the form of two hexameric ring. It depends on Mg(2+) as a cofactor.

It localises to the cytoplasm. It catalyses the reaction L-glutamate + NH4(+) + ATP = L-glutamine + ADP + phosphate + H(+). With respect to regulation, the activity of this enzyme could be controlled by adenylation under conditions of abundant glutamine. Functionally, catalyzes the ATP-dependent biosynthesis of glutamine from glutamate and ammonia. In Azorhizobium caulinodans (strain ATCC 43989 / DSM 5975 / JCM 20966 / LMG 6465 / NBRC 14845 / NCIMB 13405 / ORS 571), this protein is Glutamine synthetase.